Reading from the N-terminus, the 469-residue chain is Ribulose bisphosphate carboxylase large chain (469 aa).

Residues 1 to 2 constitute a propeptide that is removed on maturation; the sequence is MS. Residue Pro-3 is modified to N-acetylproline. N6,N6,N6-trimethyllysine is present on Lys-14. Substrate contacts are provided by Asn-123 and Thr-173. Catalysis depends on Lys-175, which acts as the Proton acceptor. Residue Lys-177 coordinates substrate. Positions 201, 203, and 204 each coordinate Mg(2+). Lys-201 is modified (N6-carboxylysine). His-294 (proton acceptor) is an active-site residue. Residues Arg-295, His-327, and Ser-379 each contribute to the substrate site.

The protein belongs to the RuBisCO large chain family. Type I subfamily. In terms of assembly, heterohexadecamer of 8 large chains and 8 small chains; disulfide-linked. The disulfide link is formed within the large subunit homodimers. Requires Mg(2+) as cofactor. The disulfide bond which can form in the large chain dimeric partners within the hexadecamer appears to be associated with oxidative stress and protein turnover.

The protein resides in the plastid. It is found in the chloroplast. It catalyses the reaction 2 (2R)-3-phosphoglycerate + 2 H(+) = D-ribulose 1,5-bisphosphate + CO2 + H2O. It carries out the reaction D-ribulose 1,5-bisphosphate + O2 = 2-phosphoglycolate + (2R)-3-phosphoglycerate + 2 H(+). Functionally, ruBisCO catalyzes two reactions: the carboxylation of D-ribulose 1,5-bisphosphate, the primary event in carbon dioxide fixation, as well as the oxidative fragmentation of the pentose substrate in the photorespiration process. Both reactions occur simultaneously and in competition at the same active site. In Brexia madagascariensis, this protein is Ribulose bisphosphate carboxylase large chain.